Reading from the N-terminus, the 407-residue chain is Phosphopentomutase (407 aa).

Mn(2+) is bound by residues Asp-10, Asp-306, His-311, Asp-347, His-348, and His-359.

It belongs to the phosphopentomutase family. The cofactor is Mn(2+).

Its subcellular location is the cytoplasm. The enzyme catalyses 2-deoxy-alpha-D-ribose 1-phosphate = 2-deoxy-D-ribose 5-phosphate. It carries out the reaction alpha-D-ribose 1-phosphate = D-ribose 5-phosphate. The protein operates within carbohydrate degradation; 2-deoxy-D-ribose 1-phosphate degradation; D-glyceraldehyde 3-phosphate and acetaldehyde from 2-deoxy-alpha-D-ribose 1-phosphate: step 1/2. Isomerase that catalyzes the conversion of deoxy-ribose 1-phosphate (dRib-1-P) and ribose 1-phosphate (Rib-1-P) to deoxy-ribose 5-phosphate (dRib-5-P) and ribose 5-phosphate (Rib-5-P), respectively. The sequence is that of Phosphopentomutase from Erwinia tasmaniensis (strain DSM 17950 / CFBP 7177 / CIP 109463 / NCPPB 4357 / Et1/99).